Reading from the N-terminus, the 188-residue chain is Protein-L-isoaspartate O-methyltransferase (188 aa).

Ser-33 is a catalytic residue.

This sequence belongs to the methyltransferase superfamily. L-isoaspartyl/D-aspartyl protein methyltransferase family.

The protein resides in the cytoplasm. The enzyme catalyses [protein]-L-isoaspartate + S-adenosyl-L-methionine = [protein]-L-isoaspartate alpha-methyl ester + S-adenosyl-L-homocysteine. In terms of biological role, catalyzes the methyl esterification of L-isoaspartyl residues in peptides and proteins that result from spontaneous decomposition of normal L-aspartyl and L-asparaginyl residues. It plays a role in the repair and/or degradation of damaged proteins. This chain is Protein-L-isoaspartate O-methyltransferase, found in Methanocella arvoryzae (strain DSM 22066 / NBRC 105507 / MRE50).